Reading from the N-terminus, the 200-residue chain is dTTP/UTP pyrophosphatase (200 aa).

Asp81 serves as the catalytic Proton acceptor.

The protein belongs to the Maf family. YhdE subfamily. A divalent metal cation serves as cofactor.

It localises to the cytoplasm. The catalysed reaction is dTTP + H2O = dTMP + diphosphate + H(+). The enzyme catalyses UTP + H2O = UMP + diphosphate + H(+). In terms of biological role, nucleoside triphosphate pyrophosphatase that hydrolyzes dTTP and UTP. May have a dual role in cell division arrest and in preventing the incorporation of modified nucleotides into cellular nucleic acids. This is dTTP/UTP pyrophosphatase from Cupriavidus pinatubonensis (strain JMP 134 / LMG 1197) (Cupriavidus necator (strain JMP 134)).